A 352-amino-acid chain; its full sequence is Histidinol-phosphate aminotransferase (352 aa).

Lys221 is subject to N6-(pyridoxal phosphate)lysine.

It belongs to the class-II pyridoxal-phosphate-dependent aminotransferase family. Histidinol-phosphate aminotransferase subfamily. As to quaternary structure, homodimer. Pyridoxal 5'-phosphate is required as a cofactor.

It carries out the reaction L-histidinol phosphate + 2-oxoglutarate = 3-(imidazol-4-yl)-2-oxopropyl phosphate + L-glutamate. It participates in amino-acid biosynthesis; L-histidine biosynthesis; L-histidine from 5-phospho-alpha-D-ribose 1-diphosphate: step 7/9. The chain is Histidinol-phosphate aminotransferase from Staphylococcus aureus (strain bovine RF122 / ET3-1).